The sequence spans 481 residues: Glutamate--tRNA ligase 2 (481 aa).

The short motif at 17-27 is the 'HIGH' region element; sequence PSPTGFLHIGG. Positions 118 to 139 are enriched in basic and acidic residues; it reads AEQRAKKQPQRYDGRWRDRDPS. Residues 118-143 form a disordered region; it reads AEQRAKKQPQRYDGRWRDRDPSEAPA. Positions 246–250 match the 'KMSKS' region motif; the sequence is KLSKR. Position 249 (Lys-249) interacts with ATP.

It belongs to the class-I aminoacyl-tRNA synthetase family. Glutamate--tRNA ligase type 1 subfamily. Monomer.

Its subcellular location is the cytoplasm. It carries out the reaction tRNA(Glu) + L-glutamate + ATP = L-glutamyl-tRNA(Glu) + AMP + diphosphate. Its function is as follows. Catalyzes the attachment of glutamate to tRNA(Glu) in a two-step reaction: glutamate is first activated by ATP to form Glu-AMP and then transferred to the acceptor end of tRNA(Glu). The chain is Glutamate--tRNA ligase 2 from Zymomonas mobilis subsp. mobilis (strain ATCC 31821 / ZM4 / CP4).